The following is a 71-amino-acid chain: NAD(P)H-quinone oxidoreductase subunit O (71 aa).

Belongs to the complex I NdhO subunit family. As to quaternary structure, NDH-1 can be composed of about 15 different subunits; different subcomplexes with different compositions have been identified which probably have different functions.

The protein localises to the cellular thylakoid membrane. The enzyme catalyses a plastoquinone + NADH + (n+1) H(+)(in) = a plastoquinol + NAD(+) + n H(+)(out). It carries out the reaction a plastoquinone + NADPH + (n+1) H(+)(in) = a plastoquinol + NADP(+) + n H(+)(out). In terms of biological role, NDH-1 shuttles electrons from an unknown electron donor, via FMN and iron-sulfur (Fe-S) centers, to quinones in the respiratory and/or the photosynthetic chain. The immediate electron acceptor for the enzyme in this species is believed to be plastoquinone. Couples the redox reaction to proton translocation, and thus conserves the redox energy in a proton gradient. Cyanobacterial NDH-1 also plays a role in inorganic carbon-concentration. The sequence is that of NAD(P)H-quinone oxidoreductase subunit O from Picosynechococcus sp. (strain ATCC 27264 / PCC 7002 / PR-6) (Agmenellum quadruplicatum).